The sequence spans 343 residues: MAYFALGLATATKNRDGKIIEAFFPTPILAPSDALVAALAPIAGYQEGNQALDITAAQSAQLAAVFAAHQQAASAAFADKAANAKQPLVLVILASDDKPQSVAEGYLKLQLISHRLVKPHGTVLDGIFGLLHNIAWTNEGPIDLPELAERQIEARLAGRVLTVDCVDKFPKMVDYVVPAGIRIADTSRVRLGAHVGEGTTVMHEGFINFNAGTTGVSMVEGRISAGVVVGNGSDIGGGASIMGTLSGGGKVVVSIGENSLLGANAGLGFPLGDRCTVESGLYVTAGTKVRTLDKDGNQVDIVKARDLAGVSDLLFRRNSLTGQIECLANKSAVELNSELHKNN.

Residue glutamate 204 coordinates Mg(2+). Residue glutamate 220 is the Acyl-anhydride intermediate of the active site. Succinyl-CoA-binding positions include arginine 222, glycine 237, serine 240, alanine 263, glutamate 278–serine 279, glycine 286, lysine 303, and arginine 316–serine 319.

It belongs to the type 2 tetrahydrodipicolinate N-succinyltransferase family. In terms of assembly, homotrimer.

The protein localises to the cytoplasm. The catalysed reaction is (S)-2,3,4,5-tetrahydrodipicolinate + succinyl-CoA + H2O = (S)-2-succinylamino-6-oxoheptanedioate + CoA. It functions in the pathway amino-acid biosynthesis; L-lysine biosynthesis via DAP pathway; LL-2,6-diaminopimelate from (S)-tetrahydrodipicolinate (succinylase route): step 1/3. Its function is as follows. Catalyzes the conversion of the cyclic tetrahydrodipicolinate (THDP) into the acyclic N-succinyl-L-2-amino-6-oxopimelate using succinyl-CoA. The chain is 2,3,4,5-tetrahydropyridine-2,6-dicarboxylate N-succinyltransferase from Vibrio cholerae serotype O1 (strain ATCC 39315 / El Tor Inaba N16961).